The primary structure comprises 414 residues: uncharacterized protein (414 aa).

In terms of domain architecture, Nop spans 246 to 360 (EAPNITKLAG…LNKRVEEIRR (115 aa)). The disordered stretch occupies residues 358 to 414 (IRRKYPKPPKKKKKEKPKAKKKEKKGKKEKSKKKKDKKKDKKGKKERKVIGKTKSRK). The span at 361–414 (KYPKPPKKKKKEKPKAKKKEKKGKKEKSKKKKDKKKDKKGKKERKVIGKTKSRK) shows a compositional bias: basic residues.

The protein belongs to the NOP5/NOP56 family.

This is an uncharacterized protein from Methanocaldococcus jannaschii (strain ATCC 43067 / DSM 2661 / JAL-1 / JCM 10045 / NBRC 100440) (Methanococcus jannaschii).